We begin with the raw amino-acid sequence, 104 residues long: Small ribosomal subunit protein uS10 (104 aa).

It belongs to the universal ribosomal protein uS10 family. Part of the 30S ribosomal subunit.

In terms of biological role, involved in the binding of tRNA to the ribosomes. The chain is Small ribosomal subunit protein uS10 from Hydrogenobaculum sp. (strain Y04AAS1).